A 475-amino-acid polypeptide reads, in one-letter code: NADH-ubiquinone oxidoreductase chain 2 (475 aa).

A run of 13 helical transmembrane segments spans residues 45-65, 82-102, 112-132, 133-153, 162-182, 198-220, 240-260, 262-282, 291-311, 318-338, 365-385, 402-422, and 447-467; these read LAVLALSFVAYLAWESIGIQY, APIVLLLIILVITLLVYLTTT, IALLMLVNLIGLILFPMVNDL, IPLYVIIELQSYSLYLLTGVY, AAILYFVTGGIASVLILLSSA, TYYSISGINTWTSFDILLIALVF, LYITAYISIVAKVSIMSFIYL, IHLFSTQLLILAFYLSVAVAA, IKSILAYSGILNFGYLLTAVL, YIYIIQYSLTHVTIFLCILAI, LCIALIVCLFSLIGIPPLPGF, LEALTIIVFSVIATYYYAYII, and FIISILMVILITFYMYLPTLL.

It belongs to the complex I subunit 2 family.

The protein localises to the mitochondrion inner membrane. The catalysed reaction is a ubiquinone + NADH + 5 H(+)(in) = a ubiquinol + NAD(+) + 4 H(+)(out). Its function is as follows. Core subunit of the mitochondrial membrane respiratory chain NADH dehydrogenase (Complex I) that is believed to belong to the minimal assembly required for catalysis. Complex I functions in the transfer of electrons from NADH to the respiratory chain. The immediate electron acceptor for the enzyme is believed to be ubiquinone. This Candida albicans (strain SC5314 / ATCC MYA-2876) (Yeast) protein is NADH-ubiquinone oxidoreductase chain 2 (NAD2).